The following is a 674-amino-acid chain: Slender lobes-like protein (674 aa).

3 disordered regions span residues 65-137 (LEKS…NASK), 168-321 (NELN…TIKK), and 352-382 (QKSRRQSLHVPSPELAAKNPKLRRRSERVEV). Basic residues predominate over residues 73 to 97 (PKKKVQTKKHLPPVRKKDSVKRRRI). The segment covering 127–137 (NQSNCSSNASK) has biased composition (polar residues). Over residues 216 to 228 (VDSDDEEEQDQDQ) the composition is skewed to acidic residues. Over residues 233–245 (KPAESENHSEIKK) the composition is skewed to basic and acidic residues. Position 248 is a phosphoserine (S248). The span at 272-312 (EDPKEAGKNEESDKDKPAENGKSDKDKQAETEMSDEDKPSE) shows a compositional bias: basic and acidic residues. 2 positions are modified to phosphoserine: S358 and S391. Disordered stretches follow at residues 395 to 585 (MVAE…AGYV) and 618 to 659 (KYFR…NSAK). The span at 400 to 410 (KRQKNKRKRLS) shows a compositional bias: basic residues. A Phosphoserine modification is found at S414. The segment covering 548–558 (AKQKKKGKKKQ) has biased composition (basic residues).

The polypeptide is Slender lobes-like protein (Drosophila melanogaster (Fruit fly)).